Here is a 327-residue protein sequence, read N- to C-terminus: MNSETLAPTPPATLVIASRESRLAMWQAEHVRCALHKLYPSCDVKILGMTTRGDQILDRTLSKVGGKGLFVKELENALADGRADLAVHSLKDVPMELPEGFVLSTIMEREDPRDAFVSNQYDSLAALPAGSVVGTSSLRREAMLRARYPELVVKPLRGNLDTRLGKLDRGDYAAIILAAAGLKRLGLGERIRSLLDPADSLPAAGQGALGIEIRAGRDDLAAWLAPLHHEHTAAAVEAERMVSRTLGGSCEVPLAAYATWHDGALHLRGIVATPDGERVLSAQASAPAATTDAALELGREVASQLEAQGALDIVRALSTASGPAASA.

Cysteine 250 is modified (S-(dipyrrolylmethanemethyl)cysteine).

Belongs to the HMBS family. As to quaternary structure, monomer. Dipyrromethane serves as cofactor.

The catalysed reaction is 4 porphobilinogen + H2O = hydroxymethylbilane + 4 NH4(+). It participates in porphyrin-containing compound metabolism; protoporphyrin-IX biosynthesis; coproporphyrinogen-III from 5-aminolevulinate: step 2/4. Its function is as follows. Tetrapolymerization of the monopyrrole PBG into the hydroxymethylbilane pre-uroporphyrinogen in several discrete steps. The protein is Porphobilinogen deaminase of Paraburkholderia phymatum (strain DSM 17167 / CIP 108236 / LMG 21445 / STM815) (Burkholderia phymatum).